The following is a 415-amino-acid chain: Protein PIN-LIKES 4 (415 aa).

The Lumenal segment spans residues 1 to 13 (MKLLELFIASSKP). The chain crosses the membrane as a helical span at residues 14 to 34 (VVETLLITSVGFYLALDTVNL). Topologically, residues 35-44 (LGHDARKHLN) are cytoplasmic. The helical transmembrane segment at 45–61 (NIVFYVFSPSLIGSRLA) threads the bilayer. Topologically, residues 62 to 75 (DSVTYESLVKMWFM) are lumenal. Residues 76-96 (PVNVLLTFMIGSLLGWIVIVI) traverse the membrane as a helical segment. At 97–106 (TKPPSQLRGL) the chain is on the cytoplasmic side. The chain crosses the membrane as a helical span at residues 107–127 (IISCCASGNLGTMPLIIIPAI). Over 128-143 (CKEKGGPFGDSESCEK) the chain is Lumenal. The chain crosses the membrane as a helical span at residues 144–161 (YGMGYVTLSMTAFFISVY). Residues 162-244 (KHDTNWYVSG…RVVSLSKKVN (83 aa)) lie on the Cytoplasmic side of the membrane. A helical transmembrane segment spans residues 245-265 (LGSIFAPATIAAIIALVIGLI). The Lumenal portion of the chain corresponds to 266–285 (TPLRNLIIGTVAPFRVIQDS). The chain crosses the membrane as a helical span at residues 286–306 (LTLLGDGAIPAMTLILGGNLL). The Cytoplasmic portion of the chain corresponds to 307 to 322 (KGMRRSEVRSSEMKNS). Residues 323 to 343 (CIIGVLVARYILLPVSGVLLV) traverse the membrane as a helical segment. The Lumenal segment spans residues 344–355 (RGAYKLDLVTSE). A helical membrane pass occupies residues 356 to 376 (PLYQFVLLLQYAVPPAMNLGT). Residues 377–389 (KTQLFGAGESECS) lie on the Cytoplasmic side of the membrane. A helical membrane pass occupies residues 390 to 410 (VIMLWTYSLAAVSLTVWPTFF). At 411-415 (MWLVT) the chain is on the lumenal side.

It belongs to the auxin efflux carrier (TC 2.A.69.2) family. As to expression, expressed in seedlings, rosette and cauline leaves, stems, flowers and siliques.

It localises to the endoplasmic reticulum membrane. Functionally, involved in cellular auxin homeostasis by regulating auxin metabolism. Regulates intracellular auxin accumulation at the endoplasmic reticulum and thus auxin availability for nuclear auxin signaling. This Arabidopsis thaliana (Mouse-ear cress) protein is Protein PIN-LIKES 4.